The following is a 448-amino-acid chain: Vimentin (448 aa).

The segment at 1-77 (PRHLEPAGSN…FSLADAINTE (77 aa)) is head. Phosphoserine is present on S9. T16 carries an O-linked (GlcNAc) threonine glycan. S17 carries the post-translational modification Phosphoserine; by PKC; alternate. S17 carries O-linked (GlcNAc) serine; alternate glycosylation. Phosphoserine; by CaMK2, PKA, PKC and ROCK2 is present on S22. S29, S31, and S33 each carry phosphoserine. Residue Y35 is modified to Phosphotyrosine. Phosphoserine is present on S37. S38 carries the post-translational modification Phosphoserine; by CDK5 and CDK1. The residue at position 43 (Y43) is a Phosphotyrosine. At S48 the chain carries Phosphoserine; by PKA and PKC. Position 54 is a phosphoserine; by AURKB and ROCK2 (S54). S55 is modified (phosphoserine). The residue at position 65 (S65) is a Phosphoserine; by CaMK2. The residue at position 69 (S69) is a Phosphoserine. The tract at residues 78–113 (FKNTRTNEKVELQELNDRFADYIDKVRFLEQQNKIL) is coil 1A. The stretch at 78–113 (FKNTRTNEKVELQELNDRFADYIDKVRFLEQQNKIL) forms a coiled coil. Residues 85-393 (EKVELQELND…KLLEGEESRI (309 aa)) form the IF rod domain. A Glycyl lysine isopeptide (Lys-Gly) (interchain with G-Cter in SUMO2) cross-link involves residue K86. Y99 carries the post-translational modification Phosphotyrosine. K102, K111, and K121 each carry N6-acetyllysine; alternate. N6-succinyllysine; alternate occurs at positions 102 and 111. Residues K102, K111, and K121 each participate in a glycyl lysine isopeptide (Lys-Gly) (interchain with G-Cter in SUMO2); alternate cross-link. Residues 114–135 (LAELEQLKGQGKSRLGDLYEEE) are linker 1. A Phosphoserine modification is found at S126. A coiled-coil region spans residues 136 to 227 (MRELRRQVDQ…KLHDEEIQEL (92 aa)). The tract at residues 136-227 (MRELRRQVDQ…KLHDEEIQEL (92 aa)) is coil 1B. The residue at position 150 (K150) is an N6-acetyllysine. N6-acetyllysine; alternate is present on K170. K170 is subject to N6-succinyllysine; alternate. S196 is subject to Phosphoserine. K205 bears the N6-acetyllysine; alternate mark. A Glycyl lysine isopeptide (Lys-Gly) (interchain with G-Cter in SUMO2); alternate cross-link involves residue K205. Residue S208 is modified to Phosphoserine. N6-acetyllysine is present on K217. A linker 12 region spans residues 228–250 (QAQIQEQHVQIDVDVSKPDLTAA). Residue K244 forms a Glycyl lysine isopeptide (Lys-Gly) (interchain with G-Cter in SUMO2) linkage. The segment at 251-389 (LRDVRQQYES…ATYRKLLEGE (139 aa)) is coil 2. K276 bears the N6-acetyllysine; alternate mark. K276 is modified (N6-succinyllysine; alternate). A Glycyl lysine isopeptide (Lys-Gly) (interchain with G-Cter in SUMO2); alternate cross-link involves residue K276. Position 281 is a phosphoserine (S281). Residues 285–389 (NRNNDALRQA…ATYRKLLEGE (105 aa)) are a coiled coil. Residue K295 forms a Glycyl lysine isopeptide (Lys-Gly) (interchain with G-Cter in SUMO2) linkage. The residue at position 307 (S307) is a Phosphoserine. The [IL]-x-C-x-x-[DE] motif signature appears at 308-311 (LTCE). K355 is modified (N6-acetyllysine; alternate). K355 is covalently cross-linked (Glycyl lysine isopeptide (Lys-Gly) (interchain with G-Cter in SUMO2); alternate). The segment at 390–448 (ESRISLPLPNFSSLNLRETNLESLPLVDTHSKRTLLIKTVETRDGQVINETSQHHDDLE) is tail. Residues S391, S394, S401, and S402 each carry the phosphoserine modification. The residue at position 408 (T408) is a Phosphothreonine. A Phosphoserine modification is found at S412. T418 bears the Phosphothreonine mark. S420 bears the Phosphoserine mark. A Glycyl lysine isopeptide (Lys-Gly) (interchain with G-Cter in SUMO2) cross-link involves residue K421. K427 carries the post-translational modification N6-acetyllysine; alternate. The residue at position 427 (K427) is an N6-succinyllysine; alternate. K427 is covalently cross-linked (Glycyl lysine isopeptide (Lys-Gly) (interchain with G-Cter in SUMO2); alternate). K427 is covalently cross-linked (Glycyl lysine isopeptide (Lys-Gly) (interchain with G-Cter in SUMO1); alternate). Phosphothreonine is present on residues T428 and T440. S441 is modified (phosphoserine).

Belongs to the intermediate filament family. Homomer assembled from elementary dimers. Identified in complexes that contain VIM, EZR, AHNAK, BFSP1, BFSP2, ANK2, PLEC, PRX and spectrin. Interacts with BCAS3. Interacts with LGSN. Interacts with SYNM. Interacts (via rod region) with PLEC (via CH 1 domain). Interacts with STK33. Interacts with LARP6. Interacts with RAB8B. Interacts with TOR1A; the interaction associates TOR1A with the cytoskeleton. Interacts with TOR1AIP1. Interacts with TOR1AIP1. Interacts with DIAPH1. Interacts with EPPK1; interaction is dependent of higher-order structure of intermediate filament. Interacts with the non-receptor tyrosine kinase SRMS; the interaction leads to phosphorylation of VIM. Interacts with NOD2. Interacts (via head region) with CORO1C. Interacts with HDGF. Interacts with PRKCE (via phorbol-ester/DAG-type 2 domain). Interacts with BFSP2. Interacts with PPL. Interacts with PKP1 and PKP2. Interacts with SCRIB (via PDZ domains); the interaction protects SCRIB from proteasomal degradation and facilitates SCRIB localization to intermediate filaments, the interaction is reduced by cell contact inhibition. Post-translationally, one of the most prominent phosphoproteins in various cells of mesenchymal origin. Phosphorylation is enhanced during cell division, at which time vimentin filaments are significantly reorganized. Phosphorylation by PKN1 inhibits the formation of filaments. Filament disassembly during mitosis is promoted by phosphorylation at Ser-37 as well as by nestin. Phosphorylated at Ser-38 by CDK5 during neutrophil secretion in the cytoplasm. Phosphorylated by STK33. Phosphorylated on tyrosine residues by SRMS. S-nitrosylation is induced by interferon-gamma and oxidatively-modified low-densitity lipoprotein (LDL(ox)) possibly implicating the iNOS-S100A8/9 transnitrosylase complex.

The protein resides in the cytoplasm. It localises to the cytoskeleton. Its subcellular location is the nucleus matrix. The protein localises to the cell membrane. In terms of biological role, vimentins are class-III intermediate filaments found in various non-epithelial cells, especially mesenchymal cells. Vimentin is attached to the nucleus, endoplasmic reticulum, and mitochondria, either laterally or terminally. Plays a role in cell directional movement, orientation, cell sheet organization and Golgi complex polarization at the cell migration front. Protects SCRIB from proteasomal degradation and facilitates its localization to intermediate filaments in a cell contact-mediated manner. Functionally, involved with LARP6 in the stabilization of type I collagen mRNAs for CO1A1 and CO1A2. This chain is Vimentin (VIM), found in Cricetulus griseus (Chinese hamster).